A 340-amino-acid polypeptide reads, in one-letter code: Histidinol-phosphate aminotransferase (340 aa).

Lysine 204 bears the N6-(pyridoxal phosphate)lysine mark.

Belongs to the class-II pyridoxal-phosphate-dependent aminotransferase family. Histidinol-phosphate aminotransferase subfamily. Requires pyridoxal 5'-phosphate as cofactor.

The enzyme catalyses L-histidinol phosphate + 2-oxoglutarate = 3-(imidazol-4-yl)-2-oxopropyl phosphate + L-glutamate. It functions in the pathway amino-acid biosynthesis; L-histidine biosynthesis; L-histidine from 5-phospho-alpha-D-ribose 1-diphosphate: step 7/9. The sequence is that of Histidinol-phosphate aminotransferase from Thermococcus gammatolerans (strain DSM 15229 / JCM 11827 / EJ3).